A 211-amino-acid chain; its full sequence is Histone H1t (211 aa).

Alanine 1 carries the N-acetylalanine modification. The span at 1 to 16 shows a compositional bias: low complexity; sequence AETAPAAPADSVPASV. Residues 1-42 form a disordered region; the sequence is AETAPAAPADSVPASVEKPPAKKRGKKPVGLTGTSRKAPSAS. Residues 32–42 are compositionally biased toward polar residues; it reads TGTSRKAPSAS. Positions 39-112 constitute an H15 domain; sequence PSASVSKLIT…GASGSFKLSK (74 aa). Arginine 57 bears the Citrulline mark. Residues 101–211 form a disordered region; the sequence is GTGASGSFKL…TNPRKATNRK (111 aa). Residues 121–135 are compositionally biased toward basic residues; sequence GKVKKPAAAKTKKLV. The residue at position 142 (serine 142) is a Phosphoserine. Positions 147–156 are enriched in basic residues; it reads KANKRAKKSR. Position 158 is a phosphothreonine (threonine 158). Serine 166 and serine 181 each carry phosphoserine. The span at 176-189 shows a compositional bias: basic residues; sequence KQQRKSPAKARAAK.

It belongs to the histone H1/H5 family. In terms of processing, phosphorylated in early spermatids. Citrullination at Arg-57 (H1R54ci) by PADI4 takes place within the DNA-binding site of H1 and results in its displacement from chromatin and global chromatin decondensation, thereby promoting pluripotency and stem cell maintenance. Testis-specific.

The protein resides in the nucleus. The protein localises to the chromosome. In terms of biological role, testis-specific histone H1 that forms less compacted chromatin compared to other H1 histone subtypes. Formation of more relaxed chromatin may be required to promote chromatin architecture required for proper chromosome regulation during meiosis, such as homologous recombination. Histones H1 act as linkers that bind to nucleosomes and compact polynucleosomes into a higher-order chromatin configuration. This Sus scrofa (Pig) protein is Histone H1t.